Consider the following 111-residue polypeptide: uncharacterized protein (111 aa).

The protein belongs to the UPF0440 family.

This is an uncharacterized protein from Pyrococcus furiosus (strain ATCC 43587 / DSM 3638 / JCM 8422 / Vc1).